We begin with the raw amino-acid sequence, 523 residues long: 2-isopropylmalate synthase (523 aa).

Residues 5–267 (VIIFDTTLRD…HTNINHHEIW (263 aa)) enclose the Pyruvate carboxyltransferase domain. Residues aspartate 14, histidine 202, histidine 204, and asparagine 238 each contribute to the Mn(2+) site. The tract at residues 392–523 (RLDYFSVQSG…QNKENNKETV (132 aa)) is regulatory domain.

Belongs to the alpha-IPM synthase/homocitrate synthase family. LeuA type 1 subfamily. As to quaternary structure, homodimer. Requires Mn(2+) as cofactor.

The protein localises to the cytoplasm. The catalysed reaction is 3-methyl-2-oxobutanoate + acetyl-CoA + H2O = (2S)-2-isopropylmalate + CoA + H(+). It participates in amino-acid biosynthesis; L-leucine biosynthesis; L-leucine from 3-methyl-2-oxobutanoate: step 1/4. In terms of biological role, catalyzes the condensation of the acetyl group of acetyl-CoA with 3-methyl-2-oxobutanoate (2-ketoisovalerate) to form 3-carboxy-3-hydroxy-4-methylpentanoate (2-isopropylmalate). This Salmonella newport (strain SL254) protein is 2-isopropylmalate synthase.